The primary structure comprises 159 residues: Phosphopantetheine adenylyltransferase (159 aa).

Thr-10 serves as a coordination point for substrate. Residues 10-11 (TF) and His-18 each bind ATP. Substrate-binding residues include Lys-42, Leu-74, and Arg-88. Residues 89–91 (GLR), Glu-99, and 124–130 (NSFISST) contribute to the ATP site.

It belongs to the bacterial CoaD family. In terms of assembly, homohexamer. It depends on Mg(2+) as a cofactor.

The protein localises to the cytoplasm. The enzyme catalyses (R)-4'-phosphopantetheine + ATP + H(+) = 3'-dephospho-CoA + diphosphate. It functions in the pathway cofactor biosynthesis; coenzyme A biosynthesis; CoA from (R)-pantothenate: step 4/5. Its function is as follows. Reversibly transfers an adenylyl group from ATP to 4'-phosphopantetheine, yielding dephospho-CoA (dPCoA) and pyrophosphate. The sequence is that of Phosphopantetheine adenylyltransferase from Shewanella halifaxensis (strain HAW-EB4).